The chain runs to 514 residues: 2,3-bisphosphoglycerate-independent phosphoglycerate mutase (514 aa).

Mn(2+) contacts are provided by Asp15 and Ser65. The Phosphoserine intermediate role is filled by Ser65. Residues His126, 156–157 (RD), Arg188, Arg194, 261–264 (RADR), and Lys335 each bind substrate. Mn(2+) is bound by residues Asp403, His407, Asp444, His445, and His462.

Belongs to the BPG-independent phosphoglycerate mutase family. In terms of assembly, monomer. Mn(2+) is required as a cofactor.

The catalysed reaction is (2R)-2-phosphoglycerate = (2R)-3-phosphoglycerate. Its pathway is carbohydrate degradation; glycolysis; pyruvate from D-glyceraldehyde 3-phosphate: step 3/5. In terms of biological role, catalyzes the interconversion of 2-phosphoglycerate and 3-phosphoglycerate. The protein is 2,3-bisphosphoglycerate-independent phosphoglycerate mutase of Syntrophotalea carbinolica (strain DSM 2380 / NBRC 103641 / GraBd1) (Pelobacter carbinolicus).